Reading from the N-terminus, the 516-residue chain is Flavonoid 3',5'-hydroxylase (516 aa).

Cysteine 453 serves as a coordination point for heme.

This sequence belongs to the cytochrome P450 family. Requires heme as cofactor.

The enzyme catalyses a 3',5'-unsubstituted flavanone + 2 reduced [NADPH--hemoprotein reductase] + 2 O2 = a 3',5'-dihydroxyflavanone + 2 oxidized [NADPH--hemoprotein reductase] + 2 H2O + 2 H(+). Its pathway is pigment biosynthesis; anthocyanin biosynthesis. Its function is as follows. Catalyzes the 3'5'-hydroxylation of naringenin and eriodictyol to form 5,7,3,'4',5'-pentahydroxyflavanone and 3',5'-hydroxylation of dihydrokaempferol and dihydroquercetin to form dihydromyricetin. The protein is Flavonoid 3',5'-hydroxylase (CYP75A4) of Gentiana triflora (Clustered gentian).